We begin with the raw amino-acid sequence, 179 residues long: Cytochrome c-type biogenesis protein CcmE (179 aa).

The Cytoplasmic portion of the chain corresponds to 1-8 (MNPRRKSR). The helical; Signal-anchor for type II membrane protein transmembrane segment at 9–29 (LTIILFVLLGVTIASSLVLYA) threads the bilayer. Topologically, residues 30–179 (LRQNIDLFYT…AVNSVEEGKK (150 aa)) are periplasmic. Residues H131 and Y135 each contribute to the heme site. 2 stretches are compositionally biased toward basic and acidic residues: residues 138–148 (PDLSEKMEQVH) and 161–179 (ESDR…EGKK). The disordered stretch occupies residues 138–179 (PDLSEKMEQVHKPMGISNQDMQGESDRDRLDKAVNSVEEGKK).

Belongs to the CcmE/CycJ family.

Its subcellular location is the cell inner membrane. Functionally, heme chaperone required for the biogenesis of c-type cytochromes. Transiently binds heme delivered by CcmC and transfers the heme to apo-cytochromes in a process facilitated by CcmF and CcmH. The chain is Cytochrome c-type biogenesis protein CcmE from Mannheimia succiniciproducens (strain KCTC 0769BP / MBEL55E).